The primary structure comprises 230 residues: uncharacterized protein (230 aa).

The next 7 helical transmembrane spans lie at 34–54 (FFAG…MNFQ), 56–76 (VVQY…GLMF), 87–107 (MLFA…GMVI), 111–131 (GLGA…LMSV), 146–166 (MLFI…FLGS), 167–187 (PMFQ…YIAY), and 205–225 (VSLY…IGIF).

It belongs to the BI1 family.

The protein localises to the cell membrane. This is an uncharacterized protein from Helicobacter pylori (strain J99 / ATCC 700824) (Campylobacter pylori J99).